A 103-amino-acid chain; its full sequence is Putative defensin-like protein 305 (103 aa).

Residues 1–31 (MREEILEIFLLVNFVFILCTSIMVRIRYVSC) form the signal peptide. Disulfide bonds link Cys-31–Cys-51, Cys-37–Cys-56, and Cys-42–Cys-58.

It belongs to the DEFL family.

The protein resides in the secreted. This Arabidopsis thaliana (Mouse-ear cress) protein is Putative defensin-like protein 305.